Consider the following 354-residue polypeptide: Large ribosomal subunit protein uL10 (354 aa).

2 stretches are compositionally biased toward acidic residues: residues 286 to 296 and 307 to 345; these read DEEALPEELQD and AEAD…DGDG. A disordered region spans residues 286 to 354; it reads DEEALPEELQ…GGDALGDMFG (69 aa).

It belongs to the universal ribosomal protein uL10 family. Part of the 50S ribosomal subunit. Forms part of the ribosomal stalk which helps the ribosome interact with GTP-bound translation factors. Forms a heptameric L10(L12)2(L12)2(L12)2 complex, where L10 forms an elongated spine to which the L12 dimers bind in a sequential fashion.

Functionally, forms part of the ribosomal stalk, playing a central role in the interaction of the ribosome with GTP-bound translation factors. This chain is Large ribosomal subunit protein uL10, found in Natronomonas pharaonis (strain ATCC 35678 / DSM 2160 / CIP 103997 / JCM 8858 / NBRC 14720 / NCIMB 2260 / Gabara) (Halobacterium pharaonis).